The sequence spans 77 residues: Sec-independent protein translocase protein TatA (77 aa).

A helical membrane pass occupies residues 3-23 (VFGIGLPELIVILVVALLIFG). The interval 56 to 77 (TAALEEEQQAKAEAESPREISP) is disordered. Residues 63–77 (QQAKAEAESPREISP) are compositionally biased toward basic and acidic residues.

The protein belongs to the TatA/E family. In terms of assembly, forms a complex with TatC.

Its subcellular location is the cell inner membrane. In terms of biological role, part of the twin-arginine translocation (Tat) system that transports large folded proteins containing a characteristic twin-arginine motif in their signal peptide across membranes. TatA could form the protein-conducting channel of the Tat system. The protein is Sec-independent protein translocase protein TatA of Thermosynechococcus vestitus (strain NIES-2133 / IAM M-273 / BP-1).